Consider the following 609-residue polypeptide: PTS system beta-glucoside-specific EIIBCA component (609 aa).

Residues 1-86 (MDYDKLSKDI…VRHSNLSDEK (86 aa)) enclose the PTS EIIB type-1 domain. The active-site Phosphocysteine intermediate; for EIIB activity is cysteine 26. Residues 103-459 (DVISGVFTPI…GSQQPAVHEG (357 aa)) enclose the PTS EIIC type-1 domain. 10 consecutive transmembrane segments (helical) span residues 112–132 (ILPAIAGAGMIKGLVALAVTF), 141–161 (VHVILTAVGDGAFYFLPLLLA), 174–194 (VAAAIAAAILHPDLTALLGAG), 202–222 (LPVTAATYSSTVIPILLSIWI), 246–266 (FTLLIVVPLTLITVGPLGAIL), 281–301 (AGLVAMILLAGTFSLIIMTGM), 321–341 (LLPAMFLANMGQAGASFAVFL), 351–371 (LALTTSITALMGITEPAMYGV), 379–399 (FAAALIGGAAGGAFYGMTGVA), and 412–432 (IPVFIGPTFIYAMIGLVIAFA). Residues 480–584 (DGVFSAGVMG…DVITPVIVTN (105 aa)) form the PTS EIIA type-1 domain. Catalysis depends on histidine 532, which acts as the Tele-phosphohistidine intermediate; for EIIA activity.

It localises to the cell membrane. In terms of biological role, the phosphoenolpyruvate-dependent sugar phosphotransferase system (sugar PTS), a major carbohydrate active -transport system, catalyzes the phosphorylation of incoming sugar substrates concomitantly with their translocation across the cell membrane. This system is involved in beta-glucoside transport. In Bacillus subtilis (strain 168), this protein is PTS system beta-glucoside-specific EIIBCA component (bglP).